Consider the following 482-residue polypeptide: Glycogen synthase (482 aa).

Lys18 serves as a coordination point for ADP-alpha-D-glucose.

The protein belongs to the glycosyltransferase 1 family. Bacterial/plant glycogen synthase subfamily.

The enzyme catalyses [(1-&gt;4)-alpha-D-glucosyl](n) + ADP-alpha-D-glucose = [(1-&gt;4)-alpha-D-glucosyl](n+1) + ADP + H(+). Its pathway is glycan biosynthesis; glycogen biosynthesis. Synthesizes alpha-1,4-glucan chains using ADP-glucose. The sequence is that of Glycogen synthase from Rhodopseudomonas palustris (strain HaA2).